The chain runs to 220 residues: Small ribosomal subunit protein uS3 (220 aa).

The KH type-2 domain occupies Ile43–Lys111.

The protein belongs to the universal ribosomal protein uS3 family. Part of the 30S ribosomal subunit. Forms a tight complex with proteins S10 and S14.

Its function is as follows. Binds the lower part of the 30S subunit head. Binds mRNA in the 70S ribosome, positioning it for translation. This chain is Small ribosomal subunit protein uS3, found in Tropheryma whipplei (strain TW08/27) (Whipple's bacillus).